A 483-amino-acid chain; its full sequence is Probable zinc metalloprotease PTRG_04977 (483 aa).

The signal sequence occupies residues 1–18; the sequence is MLFRSALLSNVLLLPACA. Asn96 and Asn121 each carry an N-linked (GlcNAc...) asparagine glycan. Zn(2+) is bound by residues His167, Asp187, and Glu220. Asn235 carries an N-linked (GlcNAc...) asparagine glycan. Residue Asp247 participates in Zn(2+) binding. 5 N-linked (GlcNAc...) asparagine glycosylation sites follow: Asn310, Asn362, Asn401, Asn411, and Asn421. One can recognise a Fibronectin type-III domain in the interval 396-483; the sequence is PAMPRNVTID…KSPAVYPFPG (88 aa).

Belongs to the peptidase M28 family. M28B subfamily. The cofactor is Zn(2+).

It is found in the secreted. This chain is Probable zinc metalloprotease PTRG_04977, found in Pyrenophora tritici-repentis (strain Pt-1C-BFP) (Wheat tan spot fungus).